Here is a 371-residue protein sequence, read N- to C-terminus: Cytochrome b (371 aa).

Transmembrane regions (helical) follow at residues 25 to 45 (FGSMLLTCLALQTLTGFFLAV), 69 to 90 (WMMQNLHAIGASMFFICIYIHI), 105 to 125 (WMSGITLLIILMATAFFGYVL), and 170 to 190 (FFALHFILPFAIISLSSLHVI). His-75 and His-89 together coordinate heme b. Heme b-binding residues include His-174 and His-188. His-193 serves as a coordination point for a ubiquinone. 4 helical membrane passes run 218-238 (YKDLLLLTLMILSLLIIVSFF), 280-300 (LGGALALVMSIMILLTIPFTH), 312-332 (LSQLMFWTLVSTFITITWAAT), and 339-358 (FIIISQVTATLYFTFFISTP).

This sequence belongs to the cytochrome b family. In terms of assembly, the cytochrome bc1 complex contains 3 respiratory subunits (MT-CYB, CYC1 and UQCRFS1), 2 core proteins (UQCRC1 and UQCRC2) and probably 6 low-molecular weight proteins. It depends on heme b as a cofactor.

It localises to the mitochondrion inner membrane. Component of the ubiquinol-cytochrome c reductase complex (complex III or cytochrome b-c1 complex) that is part of the mitochondrial respiratory chain. The b-c1 complex mediates electron transfer from ubiquinol to cytochrome c. Contributes to the generation of a proton gradient across the mitochondrial membrane that is then used for ATP synthesis. This chain is Cytochrome b (MT-CYB), found in Python sebae (African rock python).